A 363-amino-acid chain; its full sequence is UDP-N-acetylglucosamine--N-acetylmuramyl-(pentapeptide) pyrophosphoryl-undecaprenol N-acetylglucosamine transferase (363 aa).

UDP-N-acetyl-alpha-D-glucosamine is bound by residues T12–G14, N122, R164, S191, I245, and Q290.

Belongs to the glycosyltransferase 28 family. MurG subfamily.

The protein localises to the cell membrane. It carries out the reaction di-trans,octa-cis-undecaprenyl diphospho-N-acetyl-alpha-D-muramoyl-L-alanyl-D-glutamyl-meso-2,6-diaminopimeloyl-D-alanyl-D-alanine + UDP-N-acetyl-alpha-D-glucosamine = di-trans,octa-cis-undecaprenyl diphospho-[N-acetyl-alpha-D-glucosaminyl-(1-&gt;4)]-N-acetyl-alpha-D-muramoyl-L-alanyl-D-glutamyl-meso-2,6-diaminopimeloyl-D-alanyl-D-alanine + UDP + H(+). It functions in the pathway cell wall biogenesis; peptidoglycan biosynthesis. Cell wall formation. Catalyzes the transfer of a GlcNAc subunit on undecaprenyl-pyrophosphoryl-MurNAc-pentapeptide (lipid intermediate I) to form undecaprenyl-pyrophosphoryl-MurNAc-(pentapeptide)GlcNAc (lipid intermediate II). In Lawsonia intracellularis (strain PHE/MN1-00), this protein is UDP-N-acetylglucosamine--N-acetylmuramyl-(pentapeptide) pyrophosphoryl-undecaprenol N-acetylglucosamine transferase.